Reading from the N-terminus, the 442-residue chain is Chromosomal replication initiator protein DnaA (442 aa).

Residues 1 to 69 (METLWDGILS…AQAGEQVIGR (69 aa)) are domain I, interacts with DnaA modulators. Positions 69-103 (RPIQVDFIVSEQSEEALKPVIEREPAPAAPPANVA) are domain II. The interval 104 to 320 (SLNSKYTFSR…GALIRAVAYV (217 aa)) is domain III, AAA+ region. Positions 148, 150, 151, and 152 each coordinate ATP. Residues 321–442 (SISGLPMTVE…GNRLEADARH (122 aa)) are domain IV, binds dsDNA.

This sequence belongs to the DnaA family. Oligomerizes as a right-handed, spiral filament on DNA at oriC.

The protein localises to the cytoplasm. Plays an essential role in the initiation and regulation of chromosomal replication. ATP-DnaA binds to the origin of replication (oriC) to initiate formation of the DNA replication initiation complex once per cell cycle. Binds the DnaA box (a 9 base pair repeat at the origin) and separates the double-stranded (ds)DNA. Forms a right-handed helical filament on oriC DNA; dsDNA binds to the exterior of the filament while single-stranded (ss)DNA is stabiized in the filament's interior. The ATP-DnaA-oriC complex binds and stabilizes one strand of the AT-rich DNA unwinding element (DUE), permitting loading of DNA polymerase. After initiation quickly degrades to an ADP-DnaA complex that is not apt for DNA replication. Binds acidic phospholipids. The sequence is that of Chromosomal replication initiator protein DnaA from Gloeobacter violaceus (strain ATCC 29082 / PCC 7421).